Consider the following 282-residue polypeptide: Ribosomal RNA small subunit methyltransferase A (282 aa).

The segment at 1–21 (MPDFPKEHATPMSNRPPAHQA) is disordered. S-adenosyl-L-methionine-binding residues include asparagine 28, leucine 30, glycine 55, glutamate 76, aspartate 101, and asparagine 126.

This sequence belongs to the class I-like SAM-binding methyltransferase superfamily. rRNA adenine N(6)-methyltransferase family. RsmA subfamily.

It localises to the cytoplasm. The catalysed reaction is adenosine(1518)/adenosine(1519) in 16S rRNA + 4 S-adenosyl-L-methionine = N(6)-dimethyladenosine(1518)/N(6)-dimethyladenosine(1519) in 16S rRNA + 4 S-adenosyl-L-homocysteine + 4 H(+). In terms of biological role, specifically dimethylates two adjacent adenosines (A1518 and A1519) in the loop of a conserved hairpin near the 3'-end of 16S rRNA in the 30S particle. May play a critical role in biogenesis of 30S subunits. This chain is Ribosomal RNA small subunit methyltransferase A, found in Chromohalobacter salexigens (strain ATCC BAA-138 / DSM 3043 / CIP 106854 / NCIMB 13768 / 1H11).